We begin with the raw amino-acid sequence, 154 residues long: Cyclin-dependent protein kinase inhibitor SMR11 (154 aa).

Positions Met-1–Ile-44 are disordered. Residues Pro-27–Ser-38 show a composition bias toward low complexity.

Interacts with CYCB2-4.

In terms of biological role, probable cyclin-dependent protein kinase (CDK) inhibitor that functions as a repressor of mitosis in the endoreduplication cell cycle. In Arabidopsis thaliana (Mouse-ear cress), this protein is Cyclin-dependent protein kinase inhibitor SMR11.